The following is a 116-amino-acid chain: Non-specific lipid-transfer protein D, cotyledon-specific isoform (116 aa).

The signal sequence occupies residues 1–24; the sequence is MKNIFFSVFFLLSFLLCLANVSEA. 4 disulfides stabilise this stretch: C28-C76, C38-C53, C54-C98, and C74-C112.

This sequence belongs to the plant LTP family.

In terms of biological role, plant non-specific lipid-transfer proteins transfer phospholipids as well as galactolipids across membranes. May play a role in wax or cutin deposition in the cell walls of expanding epidermal cells and certain secretory tissues. This chain is Non-specific lipid-transfer protein D, cotyledon-specific isoform, found in Ricinus communis (Castor bean).